We begin with the raw amino-acid sequence, 267 residues long: 3-methyl-2-oxobutanoate hydroxymethyltransferase (267 aa).

Positions 45 and 84 each coordinate Mg(2+). Residues 45-46 (DS), Asp84, and Lys113 each bind 3-methyl-2-oxobutanoate. Residue Glu115 participates in Mg(2+) binding. The active-site Proton acceptor is Glu182.

The protein belongs to the PanB family. Homodecamer; pentamer of dimers. Requires Mg(2+) as cofactor.

Its subcellular location is the cytoplasm. It carries out the reaction 3-methyl-2-oxobutanoate + (6R)-5,10-methylene-5,6,7,8-tetrahydrofolate + H2O = 2-dehydropantoate + (6S)-5,6,7,8-tetrahydrofolate. Its pathway is cofactor biosynthesis; coenzyme A biosynthesis. Its function is as follows. Catalyzes the reversible reaction in which hydroxymethyl group from 5,10-methylenetetrahydrofolate is transferred onto alpha-ketoisovalerate to form ketopantoate. This is 3-methyl-2-oxobutanoate hydroxymethyltransferase from Saccharolobus islandicus (strain M.16.27) (Sulfolobus islandicus).